The sequence spans 511 residues: Lysine--tRNA ligase 2 (511 aa).

Residues 1 to 22 are disordered; it reads MTMEINNTDPFEKMPLPDDSGL. Residues E421 and E428 each contribute to the Mg(2+) site.

The protein belongs to the class-II aminoacyl-tRNA synthetase family. As to quaternary structure, homodimer. Mg(2+) serves as cofactor.

The protein resides in the cytoplasm. It carries out the reaction tRNA(Lys) + L-lysine + ATP = L-lysyl-tRNA(Lys) + AMP + diphosphate. The protein is Lysine--tRNA ligase 2 of Methanosarcina mazei (strain ATCC BAA-159 / DSM 3647 / Goe1 / Go1 / JCM 11833 / OCM 88) (Methanosarcina frisia).